We begin with the raw amino-acid sequence, 127 residues long: Glycine cleavage system H protein (127 aa).

The 83-residue stretch at 22–104 (EAVIGITHFA…YTEGWMLRVK (83 aa)) folds into the Lipoyl-binding domain. N6-lipoyllysine is present on Lys63.

It belongs to the GcvH family. In terms of assembly, the glycine cleavage system is composed of four proteins: P, T, L and H. The cofactor is (R)-lipoate.

Functionally, the glycine cleavage system catalyzes the degradation of glycine. The H protein shuttles the methylamine group of glycine from the P protein to the T protein. This is Glycine cleavage system H protein from Nitratidesulfovibrio vulgaris (strain DP4) (Desulfovibrio vulgaris).